Consider the following 64-residue polypeptide: LSGVRVTDLHAGVNPGDPVEVFYAVKYTPLFNYFLKVMPYSTVLTTSLINILYXDNVALAFXXI.

This sequence belongs to the class-I aminoacyl-tRNA synthetase family. Member of a complex that includes annexin.

The catalysed reaction is tRNA(Ile) + L-isoleucine + ATP = L-isoleucyl-tRNA(Ile) + AMP + diphosphate. This is Putative isoleucine--tRNA ligase from Physarum polycephalum (Slime mold).